The primary structure comprises 1502 residues: G patch domain-containing protein 8 (1502 aa).

Residues 40-86 enclose the G-patch domain; sequence SDNIGHRLLQKHGWKLGQGLGKSLQGRTDPIPIVVKYDVMGMGRMEM. Positions 89-124 form a coiled coil; sequence DYAEDATERRRVLEVEKEDTEELRQKYKDYVDKEKA. The C2H2-type zinc finger occupies 136 to 160; the sequence is FYCELCDKQYQKHQEFDNHINSYDH. The disordered stretch occupies residues 172-251; it reads REFARNVSSR…GATASCGLGS (80 aa). Basic and acidic residues predominate over residues 182-206; that stretch reads SRKDEKKQEKALRRLHELAEQRKQA. The span at 223–233 shows a compositional bias: acidic residues; that stretch reads VDEEGGEDDKD. Lysine 311 is covalently cross-linked (Glycyl lysine isopeptide (Lys-Gly) (interchain with G-Cter in SUMO2)). Composition is skewed to basic and acidic residues over residues 323-339 and 424-436; these read AEEGTSEDGTKPDEKSS and NTTHPKNAPESKK. Disordered stretches follow at residues 323 to 391 and 419 to 541; these read AEEG…ATEP and QMDG…FPVL. Polar residues predominate over residues 459–472; sequence SEVSEQPKETSMTE. N6-acetyllysine is present on lysine 479. Serine 491 carries the phosphoserine modification. Residues 491 to 519 show a composition bias toward polar residues; the sequence is SDQSLESHSQKVSETQMCESNSSKETSLA. Residue lysine 577 forms a Glycyl lysine isopeptide (Lys-Gly) (interchain with G-Cter in SUMO2) linkage. 2 stretches are compositionally biased toward basic and acidic residues: residues 579–623 and 653–670; these read SRNK…EKIV and SETEDTGRSLPSKKERSG. A disordered region spans residues 579-1301; it reads SRNKDARTKG…ESTDGAEDAS (723 aa). Serine 653 carries the post-translational modification Phosphoserine. Basic residues predominate over residues 671–692; sequence KSHRHKKKKKHKKSSKHKRKHK. The segment covering 693–707 has biased composition (basic and acidic residues); sequence ADTEEKSSKAESGEK. The span at 708–720 shows a compositional bias: basic residues; it reads SKKRKKRKRKKNK. Positions 733–743 are enriched in pro residues; that stretch reads PEPPGSGSPAP. A phosphoserine mark is found at serine 738, serine 740, and serine 758. Over residues 750–772 the composition is skewed to basic and acidic residues; the sequence is AQDDSQRRSLPAEEGSSGKKDEG. Composition is skewed to basic residues over residues 799-809 and 852-867; these read AGTKRSSRSSH and SRSRSGRRHSSHRSSR. The segment covering 868–896 has biased composition (low complexity); that stretch reads RSYSSSSDASSDQSCYSRQRSYSDDSYSD. A phosphoserine mark is found at serine 911 and serine 914. A compositionally biased stretch (basic residues) spans 919-928; it reads SKHRSKRHKY. Phosphoserine is present on residues serine 981, serine 1009, serine 1014, serine 1033, and serine 1035. Over residues 1010–1027 the composition is skewed to basic and acidic residues; sequence WGHESPEERHSGRRDFIR. Residues 1042–1059 are compositionally biased toward basic and acidic residues; it reads GRGEGPGKKDDGRGDDSK. Position 1081 is a phosphoserine (serine 1081). 2 stretches are compositionally biased toward basic and acidic residues: residues 1093–1108 and 1159–1171; these read LLEKIQSRKVERKPSV and KKCEESGLERGEE. Lysine 1105 is covalently cross-linked (Glycyl lysine isopeptide (Lys-Gly) (interchain with G-Cter in SUMO2)). Position 1107 is a phosphoserine (serine 1107). Serine 1175 is modified (phosphoserine).

This Homo sapiens (Human) protein is G patch domain-containing protein 8 (GPATCH8).